A 436-amino-acid chain; its full sequence is Xylose isomerase (436 aa).

Mg(2+)-binding residues include aspartate 306 and aspartate 308.

It belongs to the xylose isomerase family. In terms of assembly, homotetramer. The cofactor is Mg(2+).

It localises to the cytoplasm. The enzyme catalyses alpha-D-xylose = alpha-D-xylulofuranose. The chain is Xylose isomerase from Sinorhizobium fredii (strain NBRC 101917 / NGR234).